The chain runs to 367 residues: Uroporphyrinogen decarboxylase (367 aa).

Residues 28-32 (RQAGR), aspartate 78, tyrosine 158, threonine 213, and histidine 334 contribute to the substrate site.

The protein belongs to the uroporphyrinogen decarboxylase family. In terms of assembly, homodimer.

It is found in the cytoplasm. It carries out the reaction uroporphyrinogen III + 4 H(+) = coproporphyrinogen III + 4 CO2. It functions in the pathway porphyrin-containing compound metabolism; protoporphyrin-IX biosynthesis; coproporphyrinogen-III from 5-aminolevulinate: step 4/4. In terms of biological role, catalyzes the decarboxylation of four acetate groups of uroporphyrinogen-III to yield coproporphyrinogen-III. In Ralstonia pickettii (strain 12J), this protein is Uroporphyrinogen decarboxylase.